Consider the following 309-residue polypeptide: Porphobilinogen deaminase (309 aa).

An S-(dipyrrolylmethanemethyl)cysteine modification is found at cysteine 241.

Belongs to the HMBS family. In terms of assembly, monomer. The cofactor is dipyrromethane.

The catalysed reaction is 4 porphobilinogen + H2O = hydroxymethylbilane + 4 NH4(+). Its pathway is porphyrin-containing compound metabolism; protoporphyrin-IX biosynthesis; coproporphyrinogen-III from 5-aminolevulinate: step 2/4. Functionally, tetrapolymerization of the monopyrrole PBG into the hydroxymethylbilane pre-uroporphyrinogen in several discrete steps. This chain is Porphobilinogen deaminase, found in Bacillus cereus (strain AH820).